Reading from the N-terminus, the 89-residue chain is Strongylocin 2 (89 aa).

Positions 1-22 (MNIRTASFTFIVVMMILSQTMA) are cleaved as a signal peptide. Positions 23 to 38 (DRFFNEPEEDDHLVES) are excised as a propeptide. A 6'-bromotryptophan modification is found at Trp-39.

Contains 3 disulfide bonds.

Its function is as follows. Has antimicrobial activity against Gram-negative bacteria and Gram-positive bacteria with minimum inhibitory concentration (MIC) between 0.78 uM and 3.13 uM. This chain is Strongylocin 2, found in Echinus esculentus (Sea urchin).